The primary structure comprises 258 residues: Phosphoprotein ECPP44 (258 aa).

Disordered stretches follow at residues 1–25 (MASD…DRGL), 46–131 (EKVQ…PVEV), and 148–175 (KLPG…VDCA). Composition is skewed to basic and acidic residues over residues 11–25 (SVEK…DRGL), 46–80 (EKVQ…EKLH), 109–124 (GLKE…KEED), and 148–158 (KLPGGGKKVEE).

The protein belongs to the plant dehydrin family. Post-translationally, phosphorylated in embryogenic and somatic embryos. Not phosphorylated in non-embryogenic cells.

In terms of biological role, phosphorylation of ECCP44 protein is thought to be involved in the acquisition of embryogenic competence. Unlike other dehydrins, it is not thought to function as an environmental stress tolerant. This is Phosphoprotein ECPP44 (ECPP44) from Daucus carota (Wild carrot).